Consider the following 674-residue polypeptide: DNA ligase (674 aa).

NAD(+) contacts are provided by residues 34–38 (DFEFD), 83–84 (SL), and Glu117. Catalysis depends on Lys119, which acts as the N6-AMP-lysine intermediate. NAD(+) contacts are provided by Arg140, Glu184, Lys297, and Lys321. Residues Cys415, Cys418, Cys433, and Cys439 each contribute to the Zn(2+) site. A BRCT domain is found at 598 to 674 (LVNNNFEGQS…IDEDEFERML (77 aa)).

Belongs to the NAD-dependent DNA ligase family. LigA subfamily. It depends on Mg(2+) as a cofactor. Mn(2+) is required as a cofactor.

It catalyses the reaction NAD(+) + (deoxyribonucleotide)n-3'-hydroxyl + 5'-phospho-(deoxyribonucleotide)m = (deoxyribonucleotide)n+m + AMP + beta-nicotinamide D-nucleotide.. DNA ligase that catalyzes the formation of phosphodiester linkages between 5'-phosphoryl and 3'-hydroxyl groups in double-stranded DNA using NAD as a coenzyme and as the energy source for the reaction. It is essential for DNA replication and repair of damaged DNA. The chain is DNA ligase from Chlorobaculum tepidum (strain ATCC 49652 / DSM 12025 / NBRC 103806 / TLS) (Chlorobium tepidum).